We begin with the raw amino-acid sequence, 440 residues long: UDP-N-acetylmuramoylalanine--D-glutamate ligase (440 aa).

115 to 121 is an ATP binding site; it reads GSNGKST.

It belongs to the MurCDEF family.

It localises to the cytoplasm. It catalyses the reaction UDP-N-acetyl-alpha-D-muramoyl-L-alanine + D-glutamate + ATP = UDP-N-acetyl-alpha-D-muramoyl-L-alanyl-D-glutamate + ADP + phosphate + H(+). It participates in cell wall biogenesis; peptidoglycan biosynthesis. Functionally, cell wall formation. Catalyzes the addition of glutamate to the nucleotide precursor UDP-N-acetylmuramoyl-L-alanine (UMA). This Vibrio cholerae serotype O1 (strain ATCC 39315 / El Tor Inaba N16961) protein is UDP-N-acetylmuramoylalanine--D-glutamate ligase.